A 600-amino-acid chain; its full sequence is DNA mismatch repair protein MutL (600 aa).

The tract at residues 348–375 (QPQAQRPQTAWSAETSPFRPYQPTTGFS) is disordered. Residues 349–362 (PQAQRPQTAWSAET) show a composition bias toward polar residues.

This sequence belongs to the DNA mismatch repair MutL/HexB family.

In terms of biological role, this protein is involved in the repair of mismatches in DNA. It is required for dam-dependent methyl-directed DNA mismatch repair. May act as a 'molecular matchmaker', a protein that promotes the formation of a stable complex between two or more DNA-binding proteins in an ATP-dependent manner without itself being part of a final effector complex. The sequence is that of DNA mismatch repair protein MutL from Rhizobium leguminosarum bv. trifolii (strain WSM2304).